Consider the following 121-residue polypeptide: Ribosome-binding factor A (121 aa).

The protein belongs to the RbfA family. In terms of assembly, monomer. Binds 30S ribosomal subunits, but not 50S ribosomal subunits or 70S ribosomes.

The protein localises to the cytoplasm. In terms of biological role, one of several proteins that assist in the late maturation steps of the functional core of the 30S ribosomal subunit. Associates with free 30S ribosomal subunits (but not with 30S subunits that are part of 70S ribosomes or polysomes). Required for efficient processing of 16S rRNA. May interact with the 5'-terminal helix region of 16S rRNA. The chain is Ribosome-binding factor A from Lactobacillus acidophilus (strain ATCC 700396 / NCK56 / N2 / NCFM).